The sequence spans 133 residues: MAKTFYVVVIVLCLGFIHQKAYGVYMQKLSDKKLCADDECIYAISFGRAEDDYNAPDCRFVNLKKGELVYIYTKLVKENDDAGEFWSGSVYSDQYRDQQGLVGYFPSSLVTELTVYKDELQELPTTAVDFYCD.

The N-terminal stretch at 1–23 is a signal peptide; it reads MAKTFYVVVIVLCLGFIHQKAYG. Intrachain disulfides connect cysteine 35–cysteine 40 and cysteine 58–cysteine 132. In terms of domain architecture, SH3 spans 42–115; that stretch reads YAISFGRAED…PSSLVTELTV (74 aa).

This sequence belongs to the MIA/OTOR family.

The protein resides in the secreted. This chain is Otoraplin (OTOR), found in Aquarana catesbeiana (American bullfrog).